An 877-amino-acid polypeptide reads, in one-letter code: Bifunctional uridylyltransferase/uridylyl-removing enzyme (877 aa).

Positions methionine 1–proline 335 are uridylyltransferase. The tract at residues valine 336–valine 695 is uridylyl-removing. Positions valine 454–leucine 576 constitute an HD domain. ACT domains lie at glutamate 696 to arginine 778 and isoleucine 805 to glutamine 877.

Belongs to the GlnD family. Mg(2+) serves as cofactor.

The catalysed reaction is [protein-PII]-L-tyrosine + UTP = [protein-PII]-uridylyl-L-tyrosine + diphosphate. It carries out the reaction [protein-PII]-uridylyl-L-tyrosine + H2O = [protein-PII]-L-tyrosine + UMP + H(+). Uridylyltransferase (UTase) activity is inhibited by glutamine, while glutamine activates uridylyl-removing (UR) activity. Its function is as follows. Modifies, by uridylylation and deuridylylation, the PII regulatory proteins (GlnB and homologs), in response to the nitrogen status of the cell that GlnD senses through the glutamine level. Under low glutamine levels, catalyzes the conversion of the PII proteins and UTP to PII-UMP and PPi, while under higher glutamine levels, GlnD hydrolyzes PII-UMP to PII and UMP (deuridylylation). Thus, controls uridylylation state and activity of the PII proteins, and plays an important role in the regulation of nitrogen fixation and metabolism. The protein is Bifunctional uridylyltransferase/uridylyl-removing enzyme of Methylococcus capsulatus (strain ATCC 33009 / NCIMB 11132 / Bath).